The chain runs to 841 residues: ATP-dependent helicase Lhr-Core (841 aa).

ATP contacts are provided by Gln-39, Lys-62, Thr-63, Asp-181, Glu-182, Ile-352, Arg-369, and His-372. Positions 43 to 234 (IKEIHEGKNV…FLVGNGRDCY (192 aa)) constitute a Helicase ATP-binding domain. A DEVH box motif is present at residues 181–184 (DEIH). The 151-residue stretch at 266 to 416 (RLYNLLKKLI…RIHIPKNCLD (151 aa)) folds into the Helicase C-terminal domain. The WH domain stretch occupies residues 417–500 (VLAQHLVGMA…IYYMNVGTIP (84 aa)). The domain 4 stretch occupies residues 501–841 (DETAVDVIAD…MEFISMKGKK (341 aa)).

The protein belongs to the Lhr helicase family. Lhr-Core subfamily. In terms of assembly, monomer.

It catalyses the reaction Couples ATP hydrolysis with the unwinding of duplex DNA by translocating in the 3'-5' direction.. The catalysed reaction is ATP + H2O = ADP + phosphate + H(+). DNA helicase that loads on single-stranded (ss)DNA and translocates in a 3'-5' direction, probably involved in DNA repair. Archaeal orthologs have double-stranded (ds)DNA and/or RNA:DNA helicase activity. The protein is ATP-dependent helicase Lhr-Core of Methanocaldococcus jannaschii (strain ATCC 43067 / DSM 2661 / JAL-1 / JCM 10045 / NBRC 100440) (Methanococcus jannaschii).